The sequence spans 225 residues: Small ribosomal subunit protein uS3 (225 aa).

Residues 16–85 (VYEYLVKETE…TPQIEVKDVK (70 aa)) enclose the KH type-2 domain. Positions 200 to 225 (GENVGTESETDKADEQGREAANTEES) are disordered. A compositionally biased stretch (basic and acidic residues) spans 208–217 (ETDKADEQGR).

Belongs to the universal ribosomal protein uS3 family. In terms of assembly, part of the 30S ribosomal subunit.

Functionally, binds the lower part of the 30S subunit head. The protein is Small ribosomal subunit protein uS3 of Thermoplasma volcanium (strain ATCC 51530 / DSM 4299 / JCM 9571 / NBRC 15438 / GSS1).